The following is a 231-amino-acid chain: (S)-2-haloacid dehalogenase 4A (231 aa).

The Nucleophile role is filled by Asp-11. An (S)-2-haloacid-binding positions include 12-13 (AY), Arg-42, and 119-120 (SN). Positions 176 to 181 (SSNAWD) are important for catalytic activity.

It belongs to the HAD-like hydrolase superfamily. S-2-haloalkanoic acid dehalogenase family.

The catalysed reaction is an (S)-2-haloacid + H2O = a (2R)-2-hydroxycarboxylate + a halide anion + H(+). It catalyses the reaction (S)-2-chloropropanoate + H2O = (R)-lactate + chloride + H(+). Catalyzes the hydrolytic dehalogenation of small (S)-2-haloalkanoic acids to yield the corresponding (R)-2-hydroxyalkanoic acids. Acts on acids of short chain lengths, C(2) to C(4), with inversion of configuration at C-3. Active with 2-halogenated carboxylic acids and converts only the S-isomer (or L-isomer) of 2-chloropropionic acid with inversion of configuration to produce R-lactate (or D-isomer). This is (S)-2-haloacid dehalogenase 4A from Burkholderia cepacia (Pseudomonas cepacia).